The primary structure comprises 516 residues: High-affinity nitrate transporter 2.3 (516 aa).

The next 12 membrane-spanning stretches (helical) occupy residues 52 to 72 (WFSF…LPLI), 76 to 96 (LGLT…GAVF), 112 to 132 (LASA…SIIQ), 142 to 162 (FFTG…SSMF), 172 to 192 (GVAG…MPLV), 209 to 229 (IAFF…LAFG), 265 to 285 (WILA…DNVV), 299 to 319 (TAGL…PGGG), 335 to 354 (LWGL…VLGI), 367 to 387 (VLFS…VPFV), 395 to 415 (ISGM…YIFF), and 425 to 445 (GIKY…LIYF). The interval 489–516 (SVREGGRSSANGGQPRHTVPVDASPAGV) is disordered.

The protein belongs to the major facilitator superfamily. Nitrate/nitrite porter (TC 2.A.1.8) family. In terms of assembly, heterotetramer composed of two NRT2.3 and two NAR2.1. Isoform 1 interacts with NAR2.1, but not isoform 2. As to expression, expressed in the stelar cells of both primary and lateral roots, particularly at the site of lateral root emergence, root-shoot junction zone, vascular tissues of adventitious root primordia, leaves, germ tips and seed scutellum.

It is found in the cell membrane. Involved in nitrate transport, but does not seem to be able to mediate transport by its own. Acts as a dual component transporter with NAR2.1. Imports nitrate with high affinity when expressed with NAR2.1 in a heterologous system (Xenopus oocytes). Plays a key role in long-distance nitrate transport from root to shoot particularly at low external nitrate supply. This Oryza sativa subsp. japonica (Rice) protein is High-affinity nitrate transporter 2.3 (NRT2.3).